The primary structure comprises 375 residues: Aminomethyltransferase (375 aa).

It belongs to the GcvT family. As to quaternary structure, the glycine cleavage system is composed of four proteins: P, T, L and H.

The catalysed reaction is N(6)-[(R)-S(8)-aminomethyldihydrolipoyl]-L-lysyl-[protein] + (6S)-5,6,7,8-tetrahydrofolate = N(6)-[(R)-dihydrolipoyl]-L-lysyl-[protein] + (6R)-5,10-methylene-5,6,7,8-tetrahydrofolate + NH4(+). Functionally, the glycine cleavage system catalyzes the degradation of glycine. The polypeptide is Aminomethyltransferase (Ralstonia pickettii (strain 12J)).